A 430-amino-acid polypeptide reads, in one-letter code: S-adenosylmethionine synthase (430 aa).

His14 contributes to the ATP binding site. A Mg(2+)-binding site is contributed by Asp16. Glu42 contacts K(+). L-methionine contacts are provided by Glu55 and Gln98. The interval 98–108 (QSPDINRGVER) is flexible loop. ATP contacts are provided by residues 164-166 (DAK), 254-255 (KF), Asp263, 269-270 (RK), Ala286, and Lys290. Asp263 contacts L-methionine. L-methionine is bound at residue Lys294.

Belongs to the AdoMet synthase family. Homotetramer; dimer of dimers. Requires Mg(2+) as cofactor. K(+) is required as a cofactor.

Its subcellular location is the cytoplasm. The catalysed reaction is L-methionine + ATP + H2O = S-adenosyl-L-methionine + phosphate + diphosphate. The protein operates within amino-acid biosynthesis; S-adenosyl-L-methionine biosynthesis; S-adenosyl-L-methionine from L-methionine: step 1/1. Its function is as follows. Catalyzes the formation of S-adenosylmethionine (AdoMet) from methionine and ATP. The overall synthetic reaction is composed of two sequential steps, AdoMet formation and the subsequent tripolyphosphate hydrolysis which occurs prior to release of AdoMet from the enzyme. The polypeptide is S-adenosylmethionine synthase (Bacteroides thetaiotaomicron (strain ATCC 29148 / DSM 2079 / JCM 5827 / CCUG 10774 / NCTC 10582 / VPI-5482 / E50)).